The sequence spans 434 residues: Eukaryotic translation initiation factor 3 subunit E (434 aa).

The 174-residue stretch at 219-392 (FFNHPKGRDL…GHVVMGTQPL (174 aa)) folds into the PCI domain.

Belongs to the eIF-3 subunit E family. In terms of assembly, component of the eukaryotic translation initiation factor 3 (eIF-3) complex. The eIF-3 complex interacts with pix. Interacts with mxt.

Its subcellular location is the cytoplasm. In terms of biological role, component of the eukaryotic translation initiation factor 3 (eIF-3) complex, which is involved in protein synthesis of a specialized repertoire of mRNAs and, together with other initiation factors, stimulates binding of mRNA and methionyl-tRNAi to the 40S ribosome. The eIF-3 complex specifically targets and initiates translation of a subset of mRNAs involved in cell proliferation. The protein is Eukaryotic translation initiation factor 3 subunit E (eIF3-S6) of Drosophila grimshawi (Hawaiian fruit fly).